Reading from the N-terminus, the 231-residue chain is Orotidine 5'-phosphate decarboxylase (231 aa).

Substrate is bound by residues D11, K33, 60 to 69, T120, R181, Q190, G210, and R211; that span reads DLKFHDIPNT. K62 (proton donor) is an active-site residue.

Belongs to the OMP decarboxylase family. Type 1 subfamily. As to quaternary structure, homodimer.

The enzyme catalyses orotidine 5'-phosphate + H(+) = UMP + CO2. The protein operates within pyrimidine metabolism; UMP biosynthesis via de novo pathway; UMP from orotate: step 2/2. Functionally, catalyzes the decarboxylation of orotidine 5'-monophosphate (OMP) to uridine 5'-monophosphate (UMP). The polypeptide is Orotidine 5'-phosphate decarboxylase (Photobacterium profundum (strain SS9)).